The primary structure comprises 305 residues: Serine/threonine-protein kinase 16 (305 aa).

Gly2 carries the N-myristoyl glycine lipid modification. Residues Cys6 and Cys8 are each lipidated (S-palmitoyl cysteine). The Protein kinase domain occupies 20 to 293 (YLFVQKLGEG…PVLLSQLEAL (274 aa)). Residues 26–34 (LGEGGFSYV) and Lys49 contribute to the ATP site. Residue Asp148 is the Proton acceptor of the active site. Residues 166–202 (DLGSMNQACIQVEGSRQALALQDWAAQRCTISYRAPE) are activation loop. Ser197 carries the phosphoserine; by autocatalysis modification. Residue Tyr198 is modified to Phosphotyrosine; by autocatalysis.

This sequence belongs to the protein kinase superfamily. Ser/Thr protein kinase family. In terms of assembly, monomer. Interacts with DRG1 (via its N-terminal); the interaction phosphorylates DRG1. Mainly autophosphorylated on serine/threonine residues. Also autophosphorylated on Tyr-198. Expressed in heart, liver, brain, spleen, lung, skeletal muscle, kidney and testis.

It localises to the cytoplasm. Its subcellular location is the perinuclear region. It is found in the membrane. It carries out the reaction L-seryl-[protein] + ATP = O-phospho-L-seryl-[protein] + ADP + H(+). The enzyme catalyses L-threonyl-[protein] + ATP = O-phospho-L-threonyl-[protein] + ADP + H(+). The catalysed reaction is L-tyrosyl-[protein] + ATP = O-phospho-L-tyrosyl-[protein] + ADP + H(+). Membrane-associated protein kinase that phosphorylates on serine and threonine residues. In vitro substrates include DRG1, ENO1 and EIF4EBP1. Also autophosphorylates. May be involved in secretory vesicle trafficking or intracellular signaling. May have a role in regulating stromal-epithelial interactions that occur during ductal morphogenesis in the mammary gland. May be involved in TGF-beta signaling. Able to autophosphorylate on Tyr residue; it is however unclear whether it has tyrosine-protein kinase toward other proteins. This is Serine/threonine-protein kinase 16 (Stk16) from Rattus norvegicus (Rat).